The following is a 176-amino-acid chain: Large ribosomal subunit protein uL6 (176 aa).

This sequence belongs to the universal ribosomal protein uL6 family. As to quaternary structure, part of the 50S ribosomal subunit.

Its function is as follows. This protein binds to the 23S rRNA, and is important in its secondary structure. It is located near the subunit interface in the base of the L7/L12 stalk, and near the tRNA binding site of the peptidyltransferase center. This chain is Large ribosomal subunit protein uL6, found in Lacticaseibacillus paracasei (strain ATCC 334 / BCRC 17002 / CCUG 31169 / CIP 107868 / KCTC 3260 / NRRL B-441) (Lactobacillus paracasei).